Here is a 283-residue protein sequence, read N- to C-terminus: MGITGSLTPDQLDFFHSQGYLVIESFASEDEIRGLRKRMDELLNQFDCSVSSIFSTKNQKHTTDNYFFESAEKISFFFEEKAFGDDGKLKQPKQLSINKVGHALHELDPLYKDFTYSSKFSSLASSLGYRRPVVMQSMYIFKQPGIGGEVVPHQDNSFVYTDPQSCTGLWIALEDSTLVNGCLWAIPGSHKNGLVRRFIRGDNGITFDQPSPSYEQKDFVSIEMKAGSLIAIHGDLIHQSFENLSSKSRHAYSLHVVESDGCKWAKDNWIQRAKMPEPLYVLP.

2-oxoglutarate is bound by residues Lys99, Met138, 153 to 155 (HQD), and Trp170. Fe cation-binding residues include His153 and Asp155. Position 238 (His238) interacts with Fe cation. Residues Ser240 and Arg249 each contribute to the 2-oxoglutarate site.

This sequence belongs to the PhyH family. Fe cation is required as a cofactor. The cofactor is L-ascorbate.

The enzyme catalyses phytanoyl-CoA + 2-oxoglutarate + O2 = 2-hydroxyphytanoyl-CoA + succinate + CO2. Its pathway is lipid metabolism; fatty acid metabolism. Converts phytanoyl-CoA to 2-hydroxyphytanoyl-CoA. The polypeptide is Phytanoyl-CoA dioxygenase (Arabidopsis thaliana (Mouse-ear cress)).